The chain runs to 608 residues: Albumin (608 aa).

An N-terminal signal peptide occupies residues 1 to 18; the sequence is MKWVTFISLFFLFSSAYS. Residues 19 to 24 constitute a propeptide that is removed on maturation; the sequence is RGLVRR. Albumin domains lie at 19–210, 211–403, and 404–601; these read RGLV…EALR, EKVL…EFKP, and LVDE…KLVA. S29 is modified (phosphoserine). 2 residues coordinate Ca(2+): E30 and D37. C77 and C86 form a disulfide bridge. Phosphoserine occurs at positions 82 and 89. H91 is a binding site for Zn(2+). Intrachain disulfides connect C99-C115, C114-C125, C148-C193, C192-C201, C224-C270, and C269-C277. K229 bears the N6-succinyllysine mark. E268 lines the Ca(2+) pocket. Zn(2+)-binding residues include H271 and D273. 4 residues coordinate Ca(2+): D273, E276, D279, and D283. Disulfide bonds link C289/C303, C302/C313, C340/C385, C384/C393, C416/C462, C461/C472, C485/C501, and C500/C511. The residue at position 443 (S443) is a Phosphoserine. A phosphothreonine mark is found at T444 and T446. The residue at position 460 (K460) is an N6-succinyllysine. S513 is subject to Phosphoserine. 2 disulfide bridges follow: C538–C583 and C582–C591. K558 carries the post-translational modification N6-methyllysine. T570 carries the phosphothreonine modification. Residue K588 is modified to N6-succinyllysine.

Belongs to the ALB/AFP/VDB family. In terms of assembly, interacts with FCGRT; this interaction regulates ALB homeostasis. Interacts with TASOR. In plasma, occurs in a covalently-linked complex with chromophore-bound alpha-1-microglobulin; this interaction does not prevent fatty acid binding to ALB. Phosphorylated by FAM20C in the extracellular medium. As to expression, plasma.

Its subcellular location is the secreted. Binds water, Ca(2+), Na(+), K(+), fatty acids, hormones, bilirubin and drugs. Its main function is the regulation of the colloidal osmotic pressure of blood. Major zinc transporter in plasma, typically binds about 80% of all plasma zinc. Major calcium and magnesium transporter in plasma, binds approximately 45% of circulating calcium and magnesium in plasma. Potentially has more than two calcium-binding sites and might additionally bind calcium in a non-specific manner. The shared binding site between zinc and calcium at residue Asp-273 suggests a crosstalk between zinc and calcium transport in the blood. The rank order of affinity is zinc &gt; calcium &gt; magnesium. Binds to the bacterial siderophore enterobactin and inhibits enterobactin-mediated iron uptake of E.coli from ferric transferrin, and may thereby limit the utilization of iron and growth of enteric bacteria such as E.coli. Does not prevent iron uptake by the bacterial siderophore aerobactin. This Canis lupus familiaris (Dog) protein is Albumin (ALB).